Consider the following 1172-residue polypeptide: Serine/threonine-protein kinase Nek10 (1172 aa).

The ARM repeat unit spans residues 209–251; sequence GAHKTLVNLLGARDTNVLLGSLLALASLAESQECREKISELNI. Residues 481-514 adopt a coiled-coil conformation; that stretch reads YEELVSKLNLLVEDELKQIAENIESINQNKAPLK. The Protein kinase domain occupies 519 to 712; it reads YAILDHLGSG…SEPYGEKADV (194 aa). Residues 525–533 and Lys-548 each bind ATP; that span reads LGSGAFGCV. The active-site Proton acceptor is Asp-655. Disordered stretches follow at residues 855-875 and 898-954; these read SELSESADLPPEGFQASYGKD and TYSE…GSRP. Over residues 919 to 945 the composition is skewed to polar residues; that stretch reads PLKESTFNILKRSFSASGGERQSQTRD.

This sequence belongs to the protein kinase superfamily. NEK Ser/Thr protein kinase family. NIMA subfamily. In terms of assembly, interacts with RAF1 and MAP2K1; the interaction is direct with RAF1 and required for ERK1/2-signaling pathway activation in response to UV irradiation. Requires Mg(2+) as cofactor. Expressed in the lung.

It catalyses the reaction L-seryl-[protein] + ATP = O-phospho-L-seryl-[protein] + ADP + H(+). The catalysed reaction is L-threonyl-[protein] + ATP = O-phospho-L-threonyl-[protein] + ADP + H(+). In terms of biological role, plays a role in the cellular response to UV irradiation. Mediates G2/M cell cycle arrest, MEK autoactivation and ERK1/2-signaling pathway activation in response to UV irradiation. In ciliated cells of airways, it is involved in the regulation of mucociliary transport. The chain is Serine/threonine-protein kinase Nek10 from Homo sapiens (Human).